The primary structure comprises 319 residues: Urease accessory protein UreD (319 aa).

Positions 298 to 319 (QEQPLPPSSFKTNTAVPAVRTH) are disordered.

This sequence belongs to the UreD family. In terms of assembly, ureD, UreF and UreG form a complex that acts as a GTP-hydrolysis-dependent molecular chaperone, activating the urease apoprotein by helping to assemble the nickel containing metallocenter of UreC. The UreE protein probably delivers the nickel.

The protein resides in the cytoplasm. Functionally, required for maturation of urease via the functional incorporation of the urease nickel metallocenter. In Synechococcus sp. (strain WH7805), this protein is Urease accessory protein UreD.